A 642-amino-acid polypeptide reads, in one-letter code: 5-aminolevulinate synthase, non-specific, mitochondrial (642 aa).

The transit peptide at 1-56 directs the protein to the mitochondrion; it reads METVVRRCPFLSRVPQAFLQKAGKSLLFYAQNCPKMMEVGAKPAPRTVSTSAAQCQ. The interval 51–109 is disordered; the sequence is SAAQCQQVKETPPANEKEKTAKAAVQQAPDESQMAQTPDGTQLPPGHPSPSTSQSSGSK. Residues 79–90 show a composition bias toward polar residues; sequence PDESQMAQTPDG. The span at 99 to 108 shows a compositional bias: low complexity; sequence SPSTSQSSGS. Substrate-binding residues include Arg219, Ser336, and Lys355. Ser388, His416, and Thr444 together coordinate pyridoxal 5'-phosphate. The active site involves Lys447. Residue Lys447 is modified to N6-(pyridoxal phosphate)lysine. The pyridoxal 5'-phosphate site is built by Thr476 and Thr477. Thr564 serves as a coordination point for substrate. Pro578 bears the Hydroxyproline mark.

The protein belongs to the class-II pyridoxal-phosphate-dependent aminotransferase family. Homodimer. Interacts (hydroxylated form) with VHL. Requires pyridoxal 5'-phosphate as cofactor. In terms of processing, in normoxia, is hydroxylated at Pro-578, promoting interaction with VHL, initiating ubiquitination and subsequent degradation via the proteasome. Post-translationally, ubiquitinated; in normoxia following hydroxylation and interaction with VHL, leading to its subsequent degradation via the proteasome. As to expression, expressed in the liver, kidney, brain and testis.

It localises to the mitochondrion inner membrane. The enzyme catalyses succinyl-CoA + glycine + H(+) = 5-aminolevulinate + CO2 + CoA. Its pathway is porphyrin-containing compound metabolism; protoporphyrin-IX biosynthesis; 5-aminolevulinate from glycine: step 1/1. Catalyzes the pyridoxal 5'-phosphate (PLP)-dependent condensation of succinyl-CoA and glycine to form aminolevulinic acid (ALA), with CoA and CO2 as by-products. The chain is 5-aminolevulinate synthase, non-specific, mitochondrial (Alas1) from Rattus norvegicus (Rat).